Consider the following 452-residue polypeptide: Exodeoxyribonuclease 7 large subunit (452 aa).

Belongs to the XseA family. Heterooligomer composed of large and small subunits.

The protein resides in the cytoplasm. It catalyses the reaction Exonucleolytic cleavage in either 5'- to 3'- or 3'- to 5'-direction to yield nucleoside 5'-phosphates.. In terms of biological role, bidirectionally degrades single-stranded DNA into large acid-insoluble oligonucleotides, which are then degraded further into small acid-soluble oligonucleotides. The chain is Exodeoxyribonuclease 7 large subunit from Lysinibacillus sphaericus (strain C3-41).